The primary structure comprises 180 residues: Signal peptidase complex subunit 3 (180 aa).

Topologically, residues 1-12 (MHNLLSRANALL) are cytoplasmic. Residues 13–33 (AFTLWVMAAVTAACFLSTVFL) traverse the membrane as a helical; Signal-anchor for type II membrane protein segment. At 34-180 (DYTVPTKLTV…PTTYTTTRRS (147 aa)) the chain is on the lumenal side. N-linked (GlcNAc...) asparagine glycosylation occurs at N141.

The protein belongs to the SPCS3 family. As to quaternary structure, component of the signal peptidase complex (SPC) composed of a catalytic subunit sec-11 and three accessory subunits spcs-1, spcs-2 and spcs-3. The complex induces a local thinning of the ER membrane which is used to measure the length of the signal peptide (SP) h-region of protein substrates. This ensures the selectivity of the complex towards h-regions shorter than 18-20 amino acids.

It localises to the endoplasmic reticulum membrane. Its function is as follows. Essential component of the signal peptidase complex (SPC) which catalyzes the cleavage of N-terminal signal sequences from nascent proteins as they are translocated into the lumen of the endoplasmic reticulum. Essential for the SPC catalytic activity, possibly by stabilizing and positioning the active center of the complex close to the lumenal surface. The polypeptide is Signal peptidase complex subunit 3 (Caenorhabditis elegans).